The primary structure comprises 291 residues: Lipoyl synthase (291 aa).

Cys-35, Cys-40, Cys-46, Cys-61, Cys-65, Cys-68, and Ser-273 together coordinate [4Fe-4S] cluster. One can recognise a Radical SAM core domain in the interval Phe-47–Glu-262.

Belongs to the radical SAM superfamily. Lipoyl synthase family. [4Fe-4S] cluster serves as cofactor.

Its subcellular location is the cytoplasm. It catalyses the reaction [[Fe-S] cluster scaffold protein carrying a second [4Fe-4S](2+) cluster] + N(6)-octanoyl-L-lysyl-[protein] + 2 oxidized [2Fe-2S]-[ferredoxin] + 2 S-adenosyl-L-methionine + 4 H(+) = [[Fe-S] cluster scaffold protein] + N(6)-[(R)-dihydrolipoyl]-L-lysyl-[protein] + 4 Fe(3+) + 2 hydrogen sulfide + 2 5'-deoxyadenosine + 2 L-methionine + 2 reduced [2Fe-2S]-[ferredoxin]. Its pathway is protein modification; protein lipoylation via endogenous pathway; protein N(6)-(lipoyl)lysine from octanoyl-[acyl-carrier-protein]: step 2/2. Its function is as follows. Catalyzes the radical-mediated insertion of two sulfur atoms into the C-6 and C-8 positions of the octanoyl moiety bound to the lipoyl domains of lipoate-dependent enzymes, thereby converting the octanoylated domains into lipoylated derivatives. The sequence is that of Lipoyl synthase from Citrifermentans bemidjiense (strain ATCC BAA-1014 / DSM 16622 / JCM 12645 / Bem) (Geobacter bemidjiensis).